Reading from the N-terminus, the 644-residue chain is 3D-(3,5/4)-trihydroxycyclohexane-1,2-dione hydrolase (644 aa).

Residue Glu65 coordinates thiamine diphosphate. The thiamine pyrophosphate binding stretch occupies residues 442-522 (SLPGDLQRMW…INVLLFDNSG (81 aa)). Positions 493 and 520 each coordinate Mg(2+).

It belongs to the TPP enzyme family. Mg(2+) is required as a cofactor. Thiamine diphosphate serves as cofactor.

It catalyses the reaction 3D-3,5/4-trihydroxycyclohexane-1,2-dione + H2O = 5-deoxy-D-glucuronate + H(+). Its pathway is polyol metabolism; myo-inositol degradation into acetyl-CoA; acetyl-CoA from myo-inositol: step 3/7. Involved in the cleavage of the C1-C2 bond of 3D-(3,5/4)-trihydroxycyclohexane-1,2-dione (THcHDO) to yield 5-deoxy-glucuronate (5DG). The polypeptide is 3D-(3,5/4)-trihydroxycyclohexane-1,2-dione hydrolase (Bacillus cereus (strain AH820)).